Here is a 292-residue protein sequence, read N- to C-terminus: 4-hydroxy-tetrahydrodipicolinate synthase (292 aa).

T45 serves as a coordination point for pyruvate. Catalysis depends on Y133, which acts as the Proton donor/acceptor. K161 (schiff-base intermediate with substrate) is an active-site residue. I203 is a binding site for pyruvate.

It belongs to the DapA family. As to quaternary structure, homotetramer; dimer of dimers.

It is found in the cytoplasm. The catalysed reaction is L-aspartate 4-semialdehyde + pyruvate = (2S,4S)-4-hydroxy-2,3,4,5-tetrahydrodipicolinate + H2O + H(+). Its pathway is amino-acid biosynthesis; L-lysine biosynthesis via DAP pathway; (S)-tetrahydrodipicolinate from L-aspartate: step 3/4. Catalyzes the condensation of (S)-aspartate-beta-semialdehyde [(S)-ASA] and pyruvate to 4-hydroxy-tetrahydrodipicolinate (HTPA). The chain is 4-hydroxy-tetrahydrodipicolinate synthase from Nitrosomonas eutropha (strain DSM 101675 / C91 / Nm57).